Consider the following 347-residue polypeptide: NADH-ubiquinone oxidoreductase chain 2 (347 aa).

The next 11 membrane-spanning stretches (helical) occupy residues 1–21 (MNPL…MMVV), 25–45 (HWLL…PIMM), 59–79 (YLLT…INLM), 96–116 (TLMT…FWVP), 122–142 (IPLT…LSIL), 149–169 (INLH…GWGG), 178–198 (IMAY…LYNP), 200–220 (LTLL…MLFI), 237–257 (MPVI…LPPL), 274–294 (DMLI…YFYM), and 325–345 (LLPT…MLSI).

The protein belongs to the complex I subunit 2 family. As to quaternary structure, core subunit of respiratory chain NADH dehydrogenase (Complex I) which is composed of 45 different subunits. Interacts with TMEM242.

It localises to the mitochondrion inner membrane. The enzyme catalyses a ubiquinone + NADH + 5 H(+)(in) = a ubiquinol + NAD(+) + 4 H(+)(out). In terms of biological role, core subunit of the mitochondrial membrane respiratory chain NADH dehydrogenase (Complex I) which catalyzes electron transfer from NADH through the respiratory chain, using ubiquinone as an electron acceptor. Essential for the catalytic activity and assembly of complex I. This Balaenoptera physalus (Fin whale) protein is NADH-ubiquinone oxidoreductase chain 2.